Consider the following 416-residue polypeptide: uncharacterized protein (416 aa).

4 residues coordinate [4Fe-4S] cluster: cysteine 63, cysteine 75, cysteine 78, and cysteine 152. S-adenosyl-L-methionine-binding residues include glutamine 253, phenylalanine 280, glutamate 300, and aspartate 348. Cysteine 374 serves as the catalytic Nucleophile.

It belongs to the class I-like SAM-binding methyltransferase superfamily. RNA M5U methyltransferase family.

This is an uncharacterized protein from Agrobacterium fabrum (strain C58 / ATCC 33970) (Agrobacterium tumefaciens (strain C58)).